The following is a 1560-amino-acid chain: Lysine-specific demethylase 5C (1560 aa).

The JmjN domain maps to 14–55 (CPVFEPSWAEFRDPLGYIAKIRPIAEKSGICKIRPPADWQPP). The region spanning 79-169 (TRVKLNYLDQ…IVYPYEMYQS (91 aa)) is the ARID domain. Positions 197 to 207 (LRQSVQPSKFN) are enriched in polar residues. Positions 197–227 (LRQSVQPSKFNSYGRRAKRLQPDPEPTEEDI) are disordered. Residues Lys-205, Lys-229, Lys-244, and Lys-274 each participate in a glycyl lysine isopeptide (Lys-Gly) (interchain with G-Cter in SUMO2) cross-link. At Ser-287 the chain carries Phosphoserine. Lys-295 is covalently cross-linked (Glycyl lysine isopeptide (Lys-Gly) (interchain with G-Cter in SUMO2)). 2 positions are modified to phosphoserine: Ser-301 and Ser-317. The PHD-type 1 zinc-finger motif lies at 326-372 (VCRMCSRGDEDDKLLLCDGCDDNYHIFCLLPPLPEIPKGVWRCPKCV). Tyr-440 contributes to the 2-oxoglutarate binding site. The region spanning 468-634 (EYATSGWNLN…AGRQCIEHYR (167 aa)) is the JmjC domain. Residues His-514 and Glu-516 each coordinate Fe cation. The 2-oxoglutarate site is built by Ser-522, Asn-524, and Lys-532. Position 602 (His-602) interacts with Fe cation. The C5HC2 zinc finger occupies 707–759 (CIKCKTTCFLSALACYDCPDGLVCLSHINDLCKCSSSRQYLRYRYTLDELPAM). Ser-893 and Ser-897 each carry phosphoserine. Lys-1127 participates in a covalent cross-link: Glycyl lysine isopeptide (Lys-Gly) (interchain with G-Cter in SUMO2). The tract at residues 1161 to 1181 (ILQLRRTNSAKPSPLASSSTA) is disordered. Positions 1169–1181 (SAKPSPLASSSTA) are enriched in low complexity. The PHD-type 2 zinc finger occupies 1187-1248 (ICVCGQVLAG…DTKFLCPLCM (62 aa)). Disordered regions lie at residues 1316 to 1371 (QAEP…GSGK) and 1444 to 1560 (ERHG…QQQL). The segment covering 1335-1345 (PLREGSGKDMP) has biased composition (basic and acidic residues). Ser-1359 carries the phosphoserine modification. Basic residues predominate over residues 1448–1463 (SRARGRALERRRRRKV). Residues 1464–1481 (DRGGEGDDPAREELEPKR) show a composition bias toward basic and acidic residues. Positions 1488-1503 (EAEEVQEEEELEEETG) are enriched in acidic residues. Over residues 1516 to 1544 (SPSTQENQNGLEPAEGTTSGPSAPFSTLT) the composition is skewed to polar residues.

This sequence belongs to the JARID1 histone demethylase family. Part of two distinct complexes, one containing E2F6, and the other containing REST. Interacts with ZMYND8. It depends on Fe(2+) as a cofactor. In terms of tissue distribution, expressed in all tissues examined. Highest levels found in brain and skeletal muscle.

It localises to the nucleus. It carries out the reaction N(6),N(6),N(6)-trimethyl-L-lysyl(4)-[histone H3] + 3 2-oxoglutarate + 3 O2 = L-lysyl(4)-[histone H3] + 3 formaldehyde + 3 succinate + 3 CO2. The inhibitor KDOAM-25 and others inhibit its demethylase activity, resulting to cell cycle arrest in myeloma cells. Histone demethylase that specifically demethylates 'Lys-4' of histone H3, thereby playing a central role in histone code. Does not demethylate histone H3 'Lys-9', H3 'Lys-27', H3 'Lys-36', H3 'Lys-79' or H4 'Lys-20'. Demethylates trimethylated and dimethylated but not monomethylated H3 'Lys-4'. Participates in transcriptional repression of neuronal genes by recruiting histone deacetylases and REST at neuron-restrictive silencer elements. Represses the CLOCK-BMAL1 heterodimer-mediated transcriptional activation of the core clock component PER2. The chain is Lysine-specific demethylase 5C from Homo sapiens (Human).